A 540-amino-acid chain; its full sequence is Testis-specific chromodomain protein Y 1 (540 aa).

The 61-residue stretch at 6 to 66 (FEVEAIVDKR…RQTEKQKKLT (61 aa)) folds into the Chromo domain. Residues 76–106 (NNARRRTSRSTKANYSKNSPKTPVTDKHHRS) are disordered. The span at 87–97 (KANYSKNSPKT) shows a compositional bias: polar residues.

In terms of assembly, interacts (via chromo domain) with histone H3K9me3. As to expression, testis-specific. Detected in spermatids (at protein level).

The protein resides in the nucleus. The enzyme catalyses L-lysyl-[protein] + acetyl-CoA = N(6)-acetyl-L-lysyl-[protein] + CoA + H(+). Has histone acetyltransferase activity, with a preference for histone H4. This chain is Testis-specific chromodomain protein Y 1 (CDY1), found in Homo sapiens (Human).